The sequence spans 120 residues: Spermidine export protein MdtJ (120 aa).

Transmembrane regions (helical) follow at residues 1-21 (MFYW…TLSM), 31-51 (AGFI…SFAV), 54-74 (IALG…ITIF), and 81-101 (EALS…IVLI).

It belongs to the drug/metabolite transporter (DMT) superfamily. Small multidrug resistance (SMR) (TC 2.A.7.1) family. MdtJ subfamily. In terms of assembly, forms a complex with MdtI.

It is found in the cell inner membrane. Its function is as follows. Catalyzes the excretion of spermidine. In Salmonella agona (strain SL483), this protein is Spermidine export protein MdtJ.